A 765-amino-acid chain; its full sequence is MMEETTDNTGTISSQKNVAASGHNHHHRYKYISNYGVGRRFLFFASCFGFYAFVAATYAWFVFPPHIGRTDHVSSSSLGCREDNEGSWSIGVFYGDSPFSLKPIETRNVWRNESGAWPVTNPVITCASFTNSGLPSNFLADPFLYVQGDTLYLFFETKSPITMQGDIGAAKSIDKGATWEPLGIALDEAWHLSFPFVFNYNGEIYMMPESNEIGQLNLYRAVNFPLSWKLEKVILKKPLVDSTIVHHEGIYWLIGSDHTGFGAKKNGQLEIWYSSSPLGTWKPHKKNPIYNGKRSIGARNGGRAFLYDGSLYRVGQDCGENYGKRIRVSKIEVLSKEEYREVEVPFSLEASRKGKNSWNGVRQHHFDVKQLSSGEFIGLVDGDRVTSGDLFHRVILGYASLAAAISVVILLGFLLGVVNCIVPSTWCMNYYAGKRTDALLNLETAGLFSEKLRRIGSRLNRVPPFLRGFVKPNSSMGKFTLGVIVILGLLLTCVGVRYIYGGSGAVEPYPFKGHLSQFTLATMTYDARLWNLKMYVKRYSRCPSVKEIVVIWNKGPPPDLSELDSAVPVRIRVQKQNSLNNRFEIDPLIKTRAVLELDDDIMMPCDDIEKGFRVWREHPERLVGFYPRFVDQTMTYSAEKFARSHKGYNMILTGAAFMDVRFAFDMYQSDKAKLGRVFVDEQFNCEDILLNFLYANASGSGKAVEYVRPSLVTIDTSKFSGVAISGNTNQHYRKRSKCLRRFSDLYGSLVDRRWEFGGRKDGWDL.

Transmembrane regions (helical) follow at residues Phe-43–Phe-63, Val-394–Leu-414, and Met-476–Val-496. Substrate is bound by residues Asn-553, Asn-577–Arg-582, Asp-598–Asp-600, Arg-628, and Phe-683–Asp-687. Asp-600 serves as a coordination point for Mn(2+). A disulfide bridge links Cys-685 with Cys-738. Asp-687 is an active-site residue.

This sequence belongs to the glycosyltransferase 64 family. The cofactor is Mn(2+). In terms of tissue distribution, specifically and highly expressed in developing embryos and mature seeds. Also detected at low levels in stigma and pollen.

The protein localises to the membrane. It catalyses the reaction an N-(2R-hydroxy-very-long-chain fatty acyl)-(R)-4-hydroxysphingoid base + a 1,2-diacyl-sn-glycero-3-phospho-(1D-myo-inositol) = a 1D-myo-inositol-1-phospho-N-[(R)-2-hydroxy-very-long-chain fatty acyl]-(R)-4-hydroxysphingoid base + a 1,2-diacyl-sn-glycerol. Its pathway is sphingolipid metabolism. In terms of biological role, glycosyltransferase that mediates the glycosylation of glycosylinositol phosphorylceramides (GIPCs), the major sphingolipids in the plasma membrane; acts as a HexN(Ac)-specific GIPC sugar transferase and accepts glucosamine (GlcN) and N-acetylglucosamine (GlcNAc) as the sugar unit. Responsible for the glycosylation of a subgroup of GIPCs found in seeds and pollen that contain GlcNAc and GlcN (GlcN(Ac)). Maybe involved in the maintenance of cell-cell adhesion. In Arabidopsis thaliana (Mouse-ear cress), this protein is Glucosamine inositolphosphorylceramide transferase 1.